Reading from the N-terminus, the 339-residue chain is Glycerol-3-phosphate dehydrogenase [NAD(P)+] (339 aa).

4 residues coordinate NADPH: Ser-15, Tyr-16, His-36, and Lys-110. Sn-glycerol 3-phosphate contacts are provided by Lys-110, Gly-139, and Thr-141. Ala-143 is a binding site for NADPH. Residues Lys-195, Asp-248, Ser-258, Arg-259, and Asn-260 each coordinate sn-glycerol 3-phosphate. Lys-195 functions as the Proton acceptor in the catalytic mechanism. Arg-259 is a binding site for NADPH. Residues Val-283 and Glu-285 each coordinate NADPH.

It belongs to the NAD-dependent glycerol-3-phosphate dehydrogenase family.

The protein resides in the cytoplasm. It carries out the reaction sn-glycerol 3-phosphate + NAD(+) = dihydroxyacetone phosphate + NADH + H(+). The catalysed reaction is sn-glycerol 3-phosphate + NADP(+) = dihydroxyacetone phosphate + NADPH + H(+). It participates in membrane lipid metabolism; glycerophospholipid metabolism. Functionally, catalyzes the reduction of the glycolytic intermediate dihydroxyacetone phosphate (DHAP) to sn-glycerol 3-phosphate (G3P), the key precursor for phospholipid synthesis. In Escherichia fergusonii (strain ATCC 35469 / DSM 13698 / CCUG 18766 / IAM 14443 / JCM 21226 / LMG 7866 / NBRC 102419 / NCTC 12128 / CDC 0568-73), this protein is Glycerol-3-phosphate dehydrogenase [NAD(P)+].